The primary structure comprises 415 residues: Branched-chain-amino-acid aminotransferase, cytosolic (415 aa).

Residue K244 is modified to N6-(pyridoxal phosphate)lysine.

It belongs to the class-IV pyridoxal-phosphate-dependent aminotransferase family. Requires pyridoxal 5'-phosphate as cofactor.

It localises to the cytoplasm. It carries out the reaction L-leucine + 2-oxoglutarate = 4-methyl-2-oxopentanoate + L-glutamate. The catalysed reaction is L-isoleucine + 2-oxoglutarate = (S)-3-methyl-2-oxopentanoate + L-glutamate. It catalyses the reaction L-valine + 2-oxoglutarate = 3-methyl-2-oxobutanoate + L-glutamate. Functionally, catalyzes the first reaction in the catabolism of the essential branched chain amino acids leucine, isoleucine, and valine. The sequence is that of Branched-chain-amino-acid aminotransferase, cytosolic (bcat-1) from Caenorhabditis elegans.